We begin with the raw amino-acid sequence, 49 residues long: ASTQGISEDLYNRLVEMATIIQAAYADLAIYNAQTDINGASGNQAFASY.

This sequence belongs to the AB hydrolase superfamily. FaeA family.

The protein localises to the secreted. The enzyme catalyses feruloyl-polysaccharide + H2O = ferulate + polysaccharide.. In terms of biological role, involved in degradation of plant cell walls. Hydrolyzes the feruloyl-arabinose ester bond in arabinoxylans as well as the feruloyl-galactose and feruloyl-arabinose ester bonds in pectin. Active against methyl esters of sinapate (MSA), but not caffeate (MCA). In Talaromyces stipitatus (strain ATCC 10500 / CBS 375.48 / QM 6759 / NRRL 1006) (Penicillium stipitatum), this protein is Feruloyl esterase A.